The primary structure comprises 85 residues: MRNSRKVLMGVVVSDKMQKTATVKVESKNRHPFYHKLVISHKKYHVHNEEGENAAKVGDKVLIMETRPLSATKRWRIAKIIERAK.

It belongs to the universal ribosomal protein uS17 family. As to quaternary structure, part of the 30S ribosomal subunit.

One of the primary rRNA binding proteins, it binds specifically to the 5'-end of 16S ribosomal RNA. The sequence is that of Small ribosomal subunit protein uS17 from Mycoplasmoides gallisepticum (strain R(low / passage 15 / clone 2)) (Mycoplasma gallisepticum).